The following is a 166-amino-acid chain: SPbeta prophage-derived uncharacterized protein YomO (166 aa).

The sequence is that of SPbeta prophage-derived uncharacterized protein YomO (yomO) from Bacillus subtilis (strain 168).